We begin with the raw amino-acid sequence, 436 residues long: Phosphate-repressible acid phosphatase (436 aa).

The N-terminal stretch at 1–20 (MKGTAASALLIALSATAAQA) is a signal peptide. 3 N-linked (GlcNAc...) asparagine glycosylation sites follow: N227, N283, and N304.

Monomer.

The enzyme catalyses a phosphate monoester + H2O = an alcohol + phosphate. The protein is Phosphate-repressible acid phosphatase (pacA) of Aspergillus niger.